A 134-amino-acid chain; its full sequence is ATP synthase epsilon chain (134 aa).

This sequence belongs to the ATPase epsilon chain family. F-type ATPases have 2 components, CF(1) - the catalytic core - and CF(0) - the membrane proton channel. CF(1) has five subunits: alpha(3), beta(3), gamma(1), delta(1), epsilon(1). CF(0) has three main subunits: a, b and c.

The protein localises to the cellular thylakoid membrane. In terms of biological role, produces ATP from ADP in the presence of a proton gradient across the membrane. The polypeptide is ATP synthase epsilon chain (Prochlorococcus marinus (strain MIT 9515)).